A 379-amino-acid chain; its full sequence is Chaperone protein DnaJ (379 aa).

Residues Glu5–Gly69 form the J domain. A CR-type zinc finger spans residues Gly141 to Ala223. Zn(2+) is bound by residues Cys154, Cys157, Cys171, Cys174, Cys197, Cys200, Cys211, and Cys214. CXXCXGXG motif repeat units follow at residues Cys154–Gly161, Cys171–Gly178, Cys197–Gly204, and Cys211–Gly218.

This sequence belongs to the DnaJ family. Homodimer. Requires Zn(2+) as cofactor.

Its subcellular location is the cytoplasm. Participates actively in the response to hyperosmotic and heat shock by preventing the aggregation of stress-denatured proteins and by disaggregating proteins, also in an autonomous, DnaK-independent fashion. Unfolded proteins bind initially to DnaJ; upon interaction with the DnaJ-bound protein, DnaK hydrolyzes its bound ATP, resulting in the formation of a stable complex. GrpE releases ADP from DnaK; ATP binding to DnaK triggers the release of the substrate protein, thus completing the reaction cycle. Several rounds of ATP-dependent interactions between DnaJ, DnaK and GrpE are required for fully efficient folding. Also involved, together with DnaK and GrpE, in the DNA replication of plasmids through activation of initiation proteins. The polypeptide is Chaperone protein DnaJ (Lactococcus lactis subsp. lactis (strain IL1403) (Streptococcus lactis)).